The chain runs to 50 residues: Photosystem II reaction center protein M (50 aa).

The helical transmembrane segment at 7–27 threads the bilayer; that stretch reads GFIISLLFVGIPTIFLVGLYI. The disordered stretch occupies residues 31 to 50; it reads DGEKSSFFSDSSKGKLGPKS.

The protein belongs to the PsbM family. PSII is composed of 1 copy each of membrane proteins PsbA, PsbB, PsbC, PsbD, PsbE, PsbF, PsbH, PsbI, PsbJ, PsbK, PsbL, PsbM, PsbT, PsbX, PsbY, Psb30/Ycf12, peripheral proteins PsbO, CyanoQ (PsbQ), PsbU, PsbV and a large number of cofactors. It forms dimeric complexes.

It localises to the cellular thylakoid membrane. Its function is as follows. One of the components of the core complex of photosystem II (PSII). PSII is a light-driven water:plastoquinone oxidoreductase that uses light energy to abstract electrons from H(2)O, generating O(2) and a proton gradient subsequently used for ATP formation. It consists of a core antenna complex that captures photons, and an electron transfer chain that converts photonic excitation into a charge separation. This subunit is found at the monomer-monomer interface. The protein is Photosystem II reaction center protein M of Prochlorococcus marinus (strain SARG / CCMP1375 / SS120).